A 430-amino-acid chain; its full sequence is Glutamate-1-semialdehyde 2,1-aminomutase (430 aa).

Position 265 is an N6-(pyridoxal phosphate)lysine (lysine 265).

The protein belongs to the class-III pyridoxal-phosphate-dependent aminotransferase family. HemL subfamily. Requires pyridoxal 5'-phosphate as cofactor.

It localises to the cytoplasm. It carries out the reaction (S)-4-amino-5-oxopentanoate = 5-aminolevulinate. Its pathway is porphyrin-containing compound metabolism; protoporphyrin-IX biosynthesis; 5-aminolevulinate from L-glutamyl-tRNA(Glu): step 2/2. The polypeptide is Glutamate-1-semialdehyde 2,1-aminomutase (Caldivirga maquilingensis (strain ATCC 700844 / DSM 13496 / JCM 10307 / IC-167)).